A 450-amino-acid chain; its full sequence is 3-phosphoshikimate 1-carboxyvinyltransferase (450 aa).

3-phosphoshikimate contacts are provided by Lys28, Ser29, and Arg33. Lys28 is a phosphoenolpyruvate binding site. Phosphoenolpyruvate-binding residues include Gly100 and Arg128. Residues Ser173, Gln175, Asp326, and Lys353 each coordinate 3-phosphoshikimate. Gln175 contributes to the phosphoenolpyruvate binding site. The Proton acceptor role is filled by Asp326. Residues Arg357 and Arg402 each coordinate phosphoenolpyruvate.

This sequence belongs to the EPSP synthase family. In terms of assembly, monomer.

Its subcellular location is the cytoplasm. The enzyme catalyses 3-phosphoshikimate + phosphoenolpyruvate = 5-O-(1-carboxyvinyl)-3-phosphoshikimate + phosphate. It participates in metabolic intermediate biosynthesis; chorismate biosynthesis; chorismate from D-erythrose 4-phosphate and phosphoenolpyruvate: step 6/7. Its function is as follows. Catalyzes the transfer of the enolpyruvyl moiety of phosphoenolpyruvate (PEP) to the 5-hydroxyl of shikimate-3-phosphate (S3P) to produce enolpyruvyl shikimate-3-phosphate and inorganic phosphate. This Brucella abortus biovar 1 (strain 9-941) protein is 3-phosphoshikimate 1-carboxyvinyltransferase.